Here is a 202-residue protein sequence, read N- to C-terminus: Peptide methionine sulfoxide reductase A3 (202 aa).

The disordered stretch occupies residues 1-34 (MNILNRLGLGSSGQTNMDPSPIAQGNDDDTPAPG). Phosphoserine is present on Ser189.

This sequence belongs to the MsrA Met sulfoxide reductase family. As to expression, expressed in rosette and cauline leaves, and at lower levels in roots, stems and flowers (at protein level).

It localises to the cytoplasm. Its subcellular location is the cytosol. It carries out the reaction L-methionyl-[protein] + [thioredoxin]-disulfide + H2O = L-methionyl-(S)-S-oxide-[protein] + [thioredoxin]-dithiol. It catalyses the reaction [thioredoxin]-disulfide + L-methionine + H2O = L-methionine (S)-S-oxide + [thioredoxin]-dithiol. Catalyzes the reduction of methionine sulfoxide (MetSO) to methionine in proteins. Plays a protective role against oxidative stress by restoring activity to proteins that have been inactivated by methionine oxidation. May prevent cellular oxidative damage due to light exposure. MSRA family specifically reduces the MetSO S-enantiomer. This chain is Peptide methionine sulfoxide reductase A3 (MSRA3), found in Arabidopsis thaliana (Mouse-ear cress).